The following is a 599-amino-acid chain: MSMRSQYCGLVTEELLGQSVSLCGWVSRRRDHGGVIFIDLRDREGLVQVVCDPDRAEMFKAAEGVRNEFCLQIKGVVRGRPEGTTNAALKSGKIEVLCHELIVLNPSITPPFQLDDDNLSETTRLTHRVLDLRRPQMQHNLRLRYRVAIEARKYLDSLGFIDIETPMLTKSTPEGARDYLVPSRTNPGQFFALPQSPQLFKQLLMVANFDRYYQIVKCFRDEDLRADRQPEFTQIDCETSFLSEQEIRDLFEDMIRHVFKETIGVTLDEKFPVMLYSEAMRRFGSDKPDLRVKLEFTDLTDAVRDVDFKVFSTPANTKDGRVAAIRVPKGGELSRGDIDSYTEFVRIYGAKGLAWIKVNEVAKGRDGLQSPIVKNLHDEAVKAIIERTGAQDGDIIFFAADRAKVVNDSLGALRLKIGHSEFGKANGLVETGWKPLWVVDFPMFEYDEEDNRYVAAHHPFTSPKDEHLEYLETDPARCLAKAYDMVLNGWEIGGGSVRIHREEVQSKVFRALKINAEEAQAKFGFLLDALQYGAPPHGGIAFGLDRIVTMMAGADSIRDVIAFPKTQRAQCLLTQAPSEVDERQLRELHIRLRQPEPKV.

L-aspartate is bound at residue glutamate 174. The tract at residues 198 to 201 (QLFK) is aspartate. Arginine 220 serves as a coordination point for L-aspartate. Residues 220–222 (RDE) and glutamine 229 each bind ATP. Histidine 457 lines the L-aspartate pocket. Residue glutamate 491 participates in ATP binding. L-aspartate is bound at residue arginine 498. 543-546 (GLDR) contributes to the ATP binding site.

It belongs to the class-II aminoacyl-tRNA synthetase family. Type 1 subfamily. Homodimer.

The protein localises to the cytoplasm. It catalyses the reaction tRNA(Asx) + L-aspartate + ATP = L-aspartyl-tRNA(Asx) + AMP + diphosphate. Aspartyl-tRNA synthetase with relaxed tRNA specificity since it is able to aspartylate not only its cognate tRNA(Asp) but also tRNA(Asn). Reaction proceeds in two steps: L-aspartate is first activated by ATP to form Asp-AMP and then transferred to the acceptor end of tRNA(Asp/Asn). The chain is Aspartate--tRNA(Asp/Asn) ligase from Paraburkholderia phytofirmans (strain DSM 17436 / LMG 22146 / PsJN) (Burkholderia phytofirmans).